We begin with the raw amino-acid sequence, 443 residues long: MTHIQLDFSKTLEFFGEHELKQQQEIVKSIHKTIHEGTGAGSDFLGWVDLPVDYDKEEFSRIVEASKRIKENSDVLVVIGIGGSYLGARAAIEMLTSSFRNSNEYPEIVFVGNHLSSTYTKELVDYLADKDFSVNVISKSGTTTEPAVAFRLFKQLVEERYGKEEAQKRIFATTDKEKGALKQLATNEGYETFIVPDDVGGRYSVLTAVGLLPIATAGINIEAMMIGAAKAREELSSDKLEENIAYQYATIRNILYAKGYTTEMLINYEPSMQYFNEWWKQLFGESEGKDFKGIYPSSANYTTDLHSLGQYVQEGRRFLFETVVKVNHPKYDITIEKDSDDLDGLNYLAGKTIDEVNTKAFEGTLLAHTDGGVPNMIVNIPQLDEETFGYVVYFFELACAMSGYQLGVNPFNQPGVEAYKQNMFALLGKPGFEDLKKELEERL.

The active-site Proton donor is E285. Active-site residues include H306 and K420.

Belongs to the GPI family.

Its subcellular location is the cytoplasm. The catalysed reaction is alpha-D-glucose 6-phosphate = beta-D-fructose 6-phosphate. It functions in the pathway carbohydrate biosynthesis; gluconeogenesis. It participates in carbohydrate degradation; glycolysis; D-glyceraldehyde 3-phosphate and glycerone phosphate from D-glucose: step 2/4. In terms of biological role, catalyzes the reversible isomerization of glucose-6-phosphate to fructose-6-phosphate. The polypeptide is Glucose-6-phosphate isomerase (Staphylococcus aureus (strain bovine RF122 / ET3-1)).